We begin with the raw amino-acid sequence, 174 residues long: Repair DNA polymerase X (174 aa).

The interval 42 to 51 (REEKMLNDVD) is involved in ssDNA binding. Mg(2+) is bound by residues aspartate 49 and aspartate 51. Cysteine 81 and cysteine 86 are disulfide-bonded. Position 100 (aspartate 100) interacts with Mg(2+).

This sequence belongs to the DNA polymerase type-X family. The cofactor is Mg(2+).

It is found in the virion. It carries out the reaction DNA(n) + a 2'-deoxyribonucleoside 5'-triphosphate = DNA(n+1) + diphosphate. Functionally, error-prone polymerase lacking a proofreading 3'-5' exonuclease which catalyzes the gap-filling reaction during the DNA repair process. Specifically binds intermediates in the single-nucleotide base-excision repair process. Also catalyzes DNA polymerization with low nucleotide-insertion fidelity. Probably acts as a strategic DNA mutase, which gives rise to a rapid emergence of variants. Generates mismatched G-G pairs, in that case, the polymerase first binds the deoxynucleotide followed by mismatch formation. Together with the viral DNA ligase, fills the single nucleotide gaps generated by the AP endonuclease. Binds DNA with high affinity via the helix alphaE. In African swine fever virus (isolate Tick/South Africa/Pretoriuskop Pr4/1996) (ASFV), this protein is Repair DNA polymerase X.